Here is a 467-residue protein sequence, read N- to C-terminus: UDP-N-acetylmuramate--L-alanine ligase (467 aa).

Position 114–120 (114–120 (GTHGKTT)) interacts with ATP.

It belongs to the MurCDEF family.

The protein resides in the cytoplasm. The catalysed reaction is UDP-N-acetyl-alpha-D-muramate + L-alanine + ATP = UDP-N-acetyl-alpha-D-muramoyl-L-alanine + ADP + phosphate + H(+). It participates in cell wall biogenesis; peptidoglycan biosynthesis. Cell wall formation. This chain is UDP-N-acetylmuramate--L-alanine ligase, found in Rhodopseudomonas palustris (strain TIE-1).